Reading from the N-terminus, the 442-residue chain is tRNA-2-methylthio-N(6)-dimethylallyladenosine synthase (442 aa).

An MTTase N-terminal domain is found at 5–122 (KKVFIKTLGC…LPEMIKQKQK (118 aa)). [4Fe-4S] cluster-binding residues include Cys-14, Cys-51, Cys-85, Cys-159, Cys-163, and Cys-166. The 234-residue stretch at 145–378 (KAEGAKAYVS…DLLNSNAQII (234 aa)) folds into the Radical SAM core domain. The region spanning 380–442 (RQMVGTNQRI…LPNSLRGELI (63 aa)) is the TRAM domain.

This sequence belongs to the methylthiotransferase family. MiaB subfamily. Monomer. [4Fe-4S] cluster serves as cofactor.

It is found in the cytoplasm. The catalysed reaction is N(6)-dimethylallyladenosine(37) in tRNA + (sulfur carrier)-SH + AH2 + 2 S-adenosyl-L-methionine = 2-methylsulfanyl-N(6)-dimethylallyladenosine(37) in tRNA + (sulfur carrier)-H + 5'-deoxyadenosine + L-methionine + A + S-adenosyl-L-homocysteine + 2 H(+). Its function is as follows. Catalyzes the methylthiolation of N6-(dimethylallyl)adenosine (i(6)A), leading to the formation of 2-methylthio-N6-(dimethylallyl)adenosine (ms(2)i(6)A) at position 37 in tRNAs that read codons beginning with uridine. The polypeptide is tRNA-2-methylthio-N(6)-dimethylallyladenosine synthase (Francisella tularensis subsp. holarctica (strain FTNF002-00 / FTA)).